The following is a 460-amino-acid chain: Acetyl-coenzyme A carboxylase carboxyl transferase subunit beta, chloroplastic (460 aa).

One can recognise a CoA carboxyltransferase N-terminal domain in the interval 179–460; sequence LWVQCESCYG…GFFPLTQNGN (282 aa). Zn(2+) contacts are provided by cysteine 183, cysteine 186, cysteine 202, and cysteine 205. The C4-type zinc-finger motif lies at 183 to 205; sequence CESCYGLNYKKFFKSKMNICEHC.

It belongs to the AccD/PCCB family. Acetyl-CoA carboxylase is a heterohexamer composed of biotin carboxyl carrier protein, biotin carboxylase and 2 subunits each of ACCase subunit alpha and ACCase plastid-coded subunit beta (accD). Requires Zn(2+) as cofactor.

Its subcellular location is the plastid. The protein localises to the chloroplast stroma. The enzyme catalyses N(6)-carboxybiotinyl-L-lysyl-[protein] + acetyl-CoA = N(6)-biotinyl-L-lysyl-[protein] + malonyl-CoA. The protein operates within lipid metabolism; malonyl-CoA biosynthesis; malonyl-CoA from acetyl-CoA: step 1/1. Functionally, component of the acetyl coenzyme A carboxylase (ACC) complex. Biotin carboxylase (BC) catalyzes the carboxylation of biotin on its carrier protein (BCCP) and then the CO(2) group is transferred by the transcarboxylase to acetyl-CoA to form malonyl-CoA. The polypeptide is Acetyl-coenzyme A carboxylase carboxyl transferase subunit beta, chloroplastic (Cicer arietinum (Chickpea)).